The chain runs to 58 residues: Large ribosomal subunit protein uL30 (58 aa).

It belongs to the universal ribosomal protein uL30 family. In terms of assembly, part of the 50S ribosomal subunit.

In Azotobacter vinelandii (strain DJ / ATCC BAA-1303), this protein is Large ribosomal subunit protein uL30.